We begin with the raw amino-acid sequence, 880 residues long: Alanine--tRNA ligase (880 aa).

Zn(2+)-binding residues include His-567, His-571, Cys-669, and His-673.

The protein belongs to the class-II aminoacyl-tRNA synthetase family. The cofactor is Zn(2+).

It localises to the cytoplasm. It catalyses the reaction tRNA(Ala) + L-alanine + ATP = L-alanyl-tRNA(Ala) + AMP + diphosphate. Catalyzes the attachment of alanine to tRNA(Ala) in a two-step reaction: alanine is first activated by ATP to form Ala-AMP and then transferred to the acceptor end of tRNA(Ala). Also edits incorrectly charged Ser-tRNA(Ala) and Gly-tRNA(Ala) via its editing domain. The protein is Alanine--tRNA ligase of Bacillus thuringiensis (strain Al Hakam).